Consider the following 308-residue polypeptide: Microtubule integrity protein mal3 (308 aa).

A Calponin-homology (CH) domain is found at 2–103 (SESRQELLAW…FVQWAKRFWD (102 aa)). The tract at residues 117 to 162 (RGNRGPANTRVMNSSAGATGPSRRRQVSSGSSTPSMTKSSANNNNV) is disordered. The segment covering 144-162 (SSGSSTPSMTKSSANNNNV) has biased composition (low complexity). Positions 173–247 (RAKQAQQQIT…LYSTEDGFEL (75 aa)) constitute an EB1 C-terminal domain.

This sequence belongs to the MAPRE family. Interacts with tea2.

The protein localises to the cytoplasm. The protein resides in the cytoskeleton. Functionally, may play a role in regulating the integrity of microtubules possibly by influencing their stability. Involved in an anchoring mechanism to maintain tea2 and tip1 at growing microtubule ends. Strongly stimulates the ATPase activity of tea2. This chain is Microtubule integrity protein mal3 (mal3), found in Schizosaccharomyces pombe (strain 972 / ATCC 24843) (Fission yeast).